The primary structure comprises 307 residues: Fructose-bisphosphate aldolase (307 aa).

S49 provides a ligand contact to D-glyceraldehyde 3-phosphate. Catalysis depends on D82, which acts as the Proton donor. 4 residues coordinate Zn(2+): H83, D104, E134, and H180. G181 is a binding site for dihydroxyacetone phosphate. Residue H210 coordinates Zn(2+). Dihydroxyacetone phosphate is bound by residues 211-213 (GAS) and 253-256 (NTDT).

It belongs to the class II fructose-bisphosphate aldolase family. In terms of assembly, homodimer. The cofactor is Zn(2+).

It catalyses the reaction beta-D-fructose 1,6-bisphosphate = D-glyceraldehyde 3-phosphate + dihydroxyacetone phosphate. It functions in the pathway carbohydrate degradation; glycolysis; D-glyceraldehyde 3-phosphate and glycerone phosphate from D-glucose: step 4/4. Its function is as follows. Catalyzes the aldol condensation of dihydroxyacetone phosphate (DHAP or glycerone-phosphate) with glyceraldehyde 3-phosphate (G3P) to form fructose 1,6-bisphosphate (FBP) in gluconeogenesis and the reverse reaction in glycolysis. This is Fructose-bisphosphate aldolase (fba) from Helicobacter pylori (strain J99 / ATCC 700824) (Campylobacter pylori J99).